The following is a 291-amino-acid chain: U3 small nucleolar ribonucleoprotein protein IMP4 (291 aa).

A Brix domain is found at 83 to 264 (PKVMITTSRD…LYMIRLGTLE (182 aa)).

Part of the small subunit (SSU) processome, composed of more than 70 proteins and the RNA chaperone small nucleolar RNA (snoRNA) U3. Component of a heterotrimeric complex containing IMP3, IMP4 and MPHOSPH10. Interacts with MPHOSPH10.

The protein resides in the nucleus. The protein localises to the nucleolus. Functionally, component of the 60-80S U3 small nucleolar ribonucleoprotein (U3 snoRNP). Required for the early cleavages during pre-18S ribosomal RNA processing. Part of the small subunit (SSU) processome, first precursor of the small eukaryotic ribosomal subunit. During the assembly of the SSU processome in the nucleolus, many ribosome biogenesis factors, an RNA chaperone and ribosomal proteins associate with the nascent pre-rRNA and work in concert to generate RNA folding, modifications, rearrangements and cleavage as well as targeted degradation of pre-ribosomal RNA by the RNA exosome. The sequence is that of U3 small nucleolar ribonucleoprotein protein IMP4 from Homo sapiens (Human).